Reading from the N-terminus, the 865-residue chain is cGMP-specific 3',5'-cyclic phosphodiesterase (865 aa).

Residues 69–83 (CSCSSQQSSRADSSA) show a composition bias toward low complexity. A disordered region spans residues 69-92 (CSCSSQQSSRADSSAPGTPTRKIS). Residue S92 is modified to Phosphoserine. GAF domains lie at 154-304 (DVTA…GIVL) and 336-493 (SLEV…GLGI). In terms of domain architecture, PDEase spans 526–850 (ETKELQSLAA…QKWQALAEQQ (325 aa)). The active-site Proton donor is H603. Zn(2+) contacts are provided by H607, H643, D644, and D754. D644 is a Mg(2+) binding site. Q807 lines the 3',5'-cyclic GMP pocket.

The protein belongs to the cyclic nucleotide phosphodiesterase family. Zn(2+) serves as cofactor. It depends on Mg(2+) as a cofactor. Post-translationally, phosphorylation is regulated by binding of cGMP to the two allosteric sites. Phosphorylation by PRKG1 leads to its activation. Isoform PDE5A1 and isoform PDE5A2 are highly expressed in the cerebellum, hippocampus, retina, lung, heart, spleen, and thoracic artery. Isoform PDE5A1, but not isoform PDE5A2, is also abundantly expressed in the pylorus.

The protein localises to the cytoplasm. Its subcellular location is the cytosol. It catalyses the reaction 3',5'-cyclic GMP + H2O = GMP + H(+). The protein operates within purine metabolism; 3',5'-cyclic GMP degradation; GMP from 3',5'-cyclic GMP: step 1/1. Its activity is regulated as follows. Inhibited by zaprinast. Functionally, plays a role in signal transduction by regulating the intracellular concentration of cyclic nucleotides. This phosphodiesterase catalyzes the specific hydrolysis of cGMP to 5'-GMP. Specifically regulates nitric-oxide-generated cGMP. The protein is cGMP-specific 3',5'-cyclic phosphodiesterase (PDE5A) of Canis lupus familiaris (Dog).